Consider the following 439-residue polypeptide: ATP-dependent protease ATPase subunit HslU (439 aa).

ATP-binding positions include Ile-17, 59–64 (GVGKTE), Asp-251, Glu-317, and Arg-389.

Belongs to the ClpX chaperone family. HslU subfamily. As to quaternary structure, a double ring-shaped homohexamer of HslV is capped on each side by a ring-shaped HslU homohexamer. The assembly of the HslU/HslV complex is dependent on binding of ATP.

It is found in the cytoplasm. Functionally, ATPase subunit of a proteasome-like degradation complex; this subunit has chaperone activity. The binding of ATP and its subsequent hydrolysis by HslU are essential for unfolding of protein substrates subsequently hydrolyzed by HslV. HslU recognizes the N-terminal part of its protein substrates and unfolds these before they are guided to HslV for hydrolysis. This Campylobacter jejuni subsp. jejuni serotype O:2 (strain ATCC 700819 / NCTC 11168) protein is ATP-dependent protease ATPase subunit HslU.